The following is a 126-amino-acid chain: Regulatory protein MgsR (126 aa).

A disulfide bond links Cys13 and Cys16.

Belongs to the ArsC family.

It localises to the cytoplasm. With respect to regulation, activity is controlled at multiple levels. Regulation includes a positive autoregulatory loop on mgsR transcription and a post-translational redox-sensitive activation step by an intramolecular disulfide bond formation in response to ethanol stress. In addition, protein stability is strictly controlled by rapid proteolytic degradation by the ClpXP and ClpCP proteases. The McsB protein-arginine kinase might serve as a proteolytic adapter for the ClpX ATPase in the degradation mechanism of MgsR. Its function is as follows. Regulates transcription of a subregulon within the general stress response. Exerts positive and negative effects in response to ethanol stress. This is Regulatory protein MgsR from Bacillus subtilis (strain 168).